The following is a 180-amino-acid chain: Large ribosomal subunit protein uL6 (180 aa).

It belongs to the universal ribosomal protein uL6 family. As to quaternary structure, part of the 50S ribosomal subunit.

Functionally, this protein binds to the 23S rRNA, and is important in its secondary structure. It is located near the subunit interface in the base of the L7/L12 stalk, and near the tRNA binding site of the peptidyltransferase center. The polypeptide is Large ribosomal subunit protein uL6 (Clostridium botulinum (strain Alaska E43 / Type E3)).